Here is a 281-residue protein sequence, read N- to C-terminus: Probable endonuclease 4 (281 aa).

Positions 69, 109, 145, 179, 182, 216, 229, 231, and 261 each coordinate Zn(2+).

The protein belongs to the AP endonuclease 2 family. It depends on Zn(2+) as a cofactor.

It catalyses the reaction Endonucleolytic cleavage to 5'-phosphooligonucleotide end-products.. Its function is as follows. Endonuclease IV plays a role in DNA repair. It cleaves phosphodiester bonds at apurinic or apyrimidinic (AP) sites, generating a 3'-hydroxyl group and a 5'-terminal sugar phosphate. In Yersinia enterocolitica serotype O:8 / biotype 1B (strain NCTC 13174 / 8081), this protein is Probable endonuclease 4.